Consider the following 87-residue polypeptide: Glutaredoxin (87 aa).

The Glutaredoxin domain occupies 1–87 (MFVVIFGRPG…YAKENLGLFD (87 aa)). An intrachain disulfide couples cysteine 11 to cysteine 14.

It belongs to the glutaredoxin family. Monomer.

It localises to the cytoplasm. Functionally, has a glutathione-disulfide oxidoreductase activity in the presence of NADPH and glutathione reductase. Reduces low molecular weight disulfides and proteins. This chain is Glutaredoxin (grx), found in Vibrio cholerae serotype O1 (strain ATCC 39315 / El Tor Inaba N16961).